Reading from the N-terminus, the 1755-residue chain is Transposon Ty1-JR2 Gag-Pol polyprotein (1755 aa).

The segment covering 1–16 has biased composition (low complexity); that stretch reads MESQQLSQHSHISHGS. 3 disordered regions span residues 1–93, 126–173, and 352–421; these read MESQ…MMTQ, PQSQ…RPPP, and GSRN…SKST. Composition is skewed to polar residues over residues 48–60, 71–93, and 127–152; these read TKAN…TPAS, SPQT…MMTQ, and QSQF…GNTF. The segment covering 153-165 has biased composition (low complexity); the sequence is TDSSSADSDMTST. The tract at residues 299–401 is RNA-binding; sequence NNGIHINNKV…NSKSKTARAH (103 aa). Positions 402-418 are enriched in low complexity; that stretch reads NVSTSNNSPSTDNDSIS. Ser416 carries the post-translational modification Phosphoserine. Asp461 acts as the For protease activity; shared with dimeric partner in catalysis. Residues 583–640 form an integrase-type zinc finger-like region; it reads NVHTSESTRKYPYPFIHRMLAHANAQTIRYSLKNNTITYFNESDVDWSSAIDYQCPDC. The region spanning 660–835 is the Integrase catalytic domain; it reads NSYEPFQYLH…AGLDISTLLP (176 aa). Mg(2+) contacts are provided by Asp671 and Asp736. 3 disordered regions span residues 956 to 1087, 1092 to 1111, and 1130 to 1186; these read SKAV…ETEK, RSPS…NIVP, and DLPL…EDNE. Residues 960-969 show a composition bias toward low complexity; the sequence is SPTDSTPPST. Polar residues predominate over residues 1005–1015; that stretch reads STPQISNIEST. The span at 1038-1053 shows a compositional bias: basic and acidic residues; the sequence is ESSHASKSKDFRHSDS. Polar residues-rich tracts occupy residues 1054–1082 and 1101–1111; these read YSEN…QISD and PENNSSHNIVP. Residues 1178-1212 carry the Bipartite nuclear localization signal motif; that stretch reads KKRSLEDNETEIKVSRDTWNTKNMRSLEPPRSKKR. Residues 1338-1476 enclose the Reverse transcriptase Ty1/copia-type domain; the sequence is NNYYITQLDI…DILGLEIKYQ (139 aa). Mg(2+)-binding residues include Asp1346, Asp1427, Asp1428, Asp1610, Glu1652, and Asp1685. Residues 1610–1752 enclose the RNase H Ty1/copia-type domain; it reads DASYGNQPYY…IKTFKLLTNK (143 aa).

As to quaternary structure, the capsid protein forms a homotrimer, from which the VLPs are assembled. The protease is a homodimer, whose active site consists of two apposed aspartic acid residues. Initially, virus-like particles (VLPs) are composed of the structural unprocessed proteins Gag and Gag-Pol, and also contain the host initiator methionine tRNA (tRNA(i)-Met) which serves as a primer for minus-strand DNA synthesis, and a dimer of genomic Ty RNA. Processing of the polyproteins occurs within the particle and proceeds by an ordered pathway, called maturation. First, the protease (PR) is released by autocatalytic cleavage of the Gag-Pol polyprotein yielding capsid protein p45 and a Pol-p154 precursor protein. This cleavage is a prerequisite for subsequent processing of Pol-p154 at the remaining sites to release the mature structural and catalytic proteins. Maturation takes place prior to the RT reaction and is required to produce transposition-competent VLPs.

The protein localises to the cytoplasm. It is found in the nucleus. It carries out the reaction DNA(n) + a 2'-deoxyribonucleoside 5'-triphosphate = DNA(n+1) + diphosphate. The enzyme catalyses Endonucleolytic cleavage to 5'-phosphomonoester.. Capsid protein (CA) is the structural component of the virus-like particle (VLP), forming the shell that encapsulates the retrotransposons dimeric RNA genome. The particles are assembled from trimer-clustered units and there are holes in the capsid shells that allow for the diffusion of macromolecules. CA also has nucleocapsid-like chaperone activity, promoting primer tRNA(i)-Met annealing to the multipartite primer-binding site (PBS), dimerization of Ty1 RNA and initiation of reverse transcription. In terms of biological role, the aspartyl protease (PR) mediates the proteolytic cleavages of the Gag and Gag-Pol polyproteins after assembly of the VLP. Functionally, reverse transcriptase/ribonuclease H (RT) is a multifunctional enzyme that catalyzes the conversion of the retro-elements RNA genome into dsDNA within the VLP. The enzyme displays a DNA polymerase activity that can copy either DNA or RNA templates, and a ribonuclease H (RNase H) activity that cleaves the RNA strand of RNA-DNA heteroduplexes during plus-strand synthesis and hydrolyzes RNA primers. The conversion leads to a linear dsDNA copy of the retrotransposon that includes long terminal repeats (LTRs) at both ends. Its function is as follows. Integrase (IN) targets the VLP to the nucleus, where a subparticle preintegration complex (PIC) containing at least integrase and the newly synthesized dsDNA copy of the retrotransposon must transit the nuclear membrane. Once in the nucleus, integrase performs the integration of the dsDNA into the host genome. The chain is Transposon Ty1-JR2 Gag-Pol polyprotein (TY1B-JR2) from Saccharomyces cerevisiae (strain ATCC 204508 / S288c) (Baker's yeast).